The primary structure comprises 169 residues: Ureidoglycolate lyase (169 aa).

This sequence belongs to the ureidoglycolate lyase family. As to quaternary structure, homodimer. It depends on Ni(2+) as a cofactor.

It catalyses the reaction (S)-ureidoglycolate = urea + glyoxylate. The protein operates within nitrogen metabolism; (S)-allantoin degradation. Functionally, catalyzes the catabolism of the allantoin degradation intermediate (S)-ureidoglycolate, generating urea and glyoxylate. Involved in the utilization of allantoin as nitrogen source. The polypeptide is Ureidoglycolate lyase (Brucella anthropi (strain ATCC 49188 / DSM 6882 / CCUG 24695 / JCM 21032 / LMG 3331 / NBRC 15819 / NCTC 12168 / Alc 37) (Ochrobactrum anthropi)).